Reading from the N-terminus, the 201-residue chain is Peptide deformylase (201 aa).

The Fe cation site is built by Cys114 and His156. Residue Glu157 is part of the active site. His160 serves as a coordination point for Fe cation.

This sequence belongs to the polypeptide deformylase family. Fe(2+) serves as cofactor.

It catalyses the reaction N-terminal N-formyl-L-methionyl-[peptide] + H2O = N-terminal L-methionyl-[peptide] + formate. In terms of biological role, removes the formyl group from the N-terminal Met of newly synthesized proteins. Requires at least a dipeptide for an efficient rate of reaction. N-terminal L-methionine is a prerequisite for activity but the enzyme has broad specificity at other positions. The sequence is that of Peptide deformylase from Tropheryma whipplei (strain TW08/27) (Whipple's bacillus).